The primary structure comprises 305 residues: Dihydroorotate dehydrogenase B (NAD(+)), catalytic subunit (305 aa).

FMN-binding positions include Ser23 and 47–48; that span reads KG. Substrate contacts are provided by residues Lys47 and 71-75; that span reads NAIGL. 2 residues coordinate FMN: Asn101 and Asn129. Residue Asn129 participates in substrate binding. Catalysis depends on Cys132, which acts as the Nucleophile. FMN contacts are provided by Lys167 and Ile193. 194–195 lines the substrate pocket; the sequence is NT. Residues Gly219, 245 to 246, and 267 to 268 each bind FMN; these read GG and GT.

This sequence belongs to the dihydroorotate dehydrogenase family. Type 1 subfamily. As to quaternary structure, heterotetramer of 2 PyrK and 2 PyrD type B subunits. The cofactor is FMN.

The protein localises to the cytoplasm. The catalysed reaction is (S)-dihydroorotate + NAD(+) = orotate + NADH + H(+). Its pathway is pyrimidine metabolism; UMP biosynthesis via de novo pathway; orotate from (S)-dihydroorotate (NAD(+) route): step 1/1. In terms of biological role, catalyzes the conversion of dihydroorotate to orotate with NAD(+) as electron acceptor. The polypeptide is Dihydroorotate dehydrogenase B (NAD(+)), catalytic subunit (pyrD) (Citrifermentans bemidjiense (strain ATCC BAA-1014 / DSM 16622 / JCM 12645 / Bem) (Geobacter bemidjiensis)).